The sequence spans 324 residues: Olfactory receptor 6K2 (324 aa).

Over 1–25 the chain is Extracellular; the sequence is MESPNRTTIQEFIFSAFPYSWVKSV. Asn5 is a glycosylation site (N-linked (GlcNAc...) asparagine). The chain crosses the membrane as a helical span at residues 26–46; that stretch reads VCFVPLLFIYAFIVVGNLVII. Residues 47–54 lie on the Cytoplasmic side of the membrane; that stretch reads TVVQLNTH. Residues 55 to 75 form a helical membrane-spanning segment; that stretch reads LHTPMYTFISALSFLEIWYTT. Residues 76–98 are Extracellular-facing; that stretch reads ATIPKMLSSLLSERSISFNGCLL. The cysteines at positions 96 and 188 are disulfide-linked. Residues 99-119 traverse the membrane as a helical segment; it reads QMYFFHSTGICEVCLLTVMAF. Residues 120–138 lie on the Cytoplasmic side of the membrane; it reads DHYLAICSPLHYPSIMTPK. A helical membrane pass occupies residues 139-159; that stretch reads LCTQLTLSCCVCGFITPLPEI. Topologically, residues 160–198 are extracellular; that stretch reads AWISTLPFCGSNHLEHIFCDFLPVLRLACTDTRAIVMIQ. Residues 199 to 218 form a helical membrane-spanning segment; the sequence is VVDVIHAVEIITAVMLIFMS. At 219–238 the chain is on the cytoplasmic side; the sequence is YDGIVAVILRIHSAGGRRTA. A helical membrane pass occupies residues 239 to 259; it reads FSTCVSHFIVFSLFFGSVTLM. At 260-272 the chain is on the extracellular side; the sequence is YLRFSATYSLFWD. The helical transmembrane segment at 273-293 threads the bilayer; the sequence is IAIALAFAVLSPFFNPIIYSL. The Cytoplasmic portion of the chain corresponds to 294-324; it reads RNKEIKEAIKKHIGQAKIFFSVRPGTSSKIF.

Belongs to the G-protein coupled receptor 1 family.

The protein localises to the cell membrane. Odorant receptor. In Homo sapiens (Human), this protein is Olfactory receptor 6K2 (OR6K2).